The sequence spans 232 residues: Large ribosomal subunit protein uL1 (232 aa).

Belongs to the universal ribosomal protein uL1 family. Part of the 50S ribosomal subunit.

In terms of biological role, binds directly to 23S rRNA. The L1 stalk is quite mobile in the ribosome, and is involved in E site tRNA release. Protein L1 is also a translational repressor protein, it controls the translation of the L11 operon by binding to its mRNA. This is Large ribosomal subunit protein uL1 from Thermosipho melanesiensis (strain DSM 12029 / CIP 104789 / BI429).